Consider the following 105-residue polypeptide: Large ribosomal subunit protein uL24 (105 aa).

It belongs to the universal ribosomal protein uL24 family. As to quaternary structure, part of the 50S ribosomal subunit.

In terms of biological role, one of two assembly initiator proteins, it binds directly to the 5'-end of the 23S rRNA, where it nucleates assembly of the 50S subunit. Its function is as follows. One of the proteins that surrounds the polypeptide exit tunnel on the outside of the subunit. This is Large ribosomal subunit protein uL24 from Anaplasma marginale (strain St. Maries).